The following is a 337-amino-acid chain: Glycerol-3-phosphate dehydrogenase [NAD(P)+] (337 aa).

Residues Trp12 and Lys107 each coordinate NADPH. Residues Lys107, Gly138, and Thr140 each coordinate sn-glycerol 3-phosphate. Ala142 is a binding site for NADPH. Residues Lys193, Asp246, Ser256, Arg257, and Asn258 each coordinate sn-glycerol 3-phosphate. Lys193 acts as the Proton acceptor in catalysis. NADPH is bound at residue Arg257. NADPH-binding residues include Val282 and Glu284.

Belongs to the NAD-dependent glycerol-3-phosphate dehydrogenase family.

It is found in the cytoplasm. It catalyses the reaction sn-glycerol 3-phosphate + NAD(+) = dihydroxyacetone phosphate + NADH + H(+). The enzyme catalyses sn-glycerol 3-phosphate + NADP(+) = dihydroxyacetone phosphate + NADPH + H(+). It functions in the pathway membrane lipid metabolism; glycerophospholipid metabolism. Catalyzes the reduction of the glycolytic intermediate dihydroxyacetone phosphate (DHAP) to sn-glycerol 3-phosphate (G3P), the key precursor for phospholipid synthesis. The protein is Glycerol-3-phosphate dehydrogenase [NAD(P)+] of Koribacter versatilis (strain Ellin345).